The sequence spans 415 residues: MDPDTEQMRVEKPNHEQPKPNTEFPDGGFKAWSVVVGAFCGLFVGVFQAYYEANQLQDLSPSTVSWIPAISMFIMFITGPFVGRAFDNYGPRYLLLAGTLLHVFGLMMASISSQYYQYILSQAICSPLGAAMVLYPSFSCVTTWFRQKRALALGITASGSSLGGTILPIVVNRLIPRIGFGWTMRACAFLLLGLLLVTNLTVRSRVAPQPKEAGIIAYLRPFTSLSFILTSLAGFFYSMGMFIPITFMVTYGEHVGLSNSMAGYLVSIFNASSGIGRILPGYIADKVGSFNVSIAAATLSTIFMLGLWLPGHSRESAIAFAALFGFSSGTYTAISPALIAHISDLEEIGTRSGTMYAFMSVAALTGSPIGGALISSAGGSYWKLQVFAGCMLGAGTVFYVLARLYITKGRLWEKV.

Residues 1 to 18 are compositionally biased toward basic and acidic residues; the sequence is MDPDTEQMRVEKPNHEQP. Residues 1–22 form a disordered region; that stretch reads MDPDTEQMRVEKPNHEQPKPNT. 6 consecutive transmembrane segments (helical) span residues 27 to 47, 63 to 83, 93 to 113, 118 to 138, 151 to 171, and 178 to 198; these read GGFK…VGVF, TVSW…PFVG, YLLL…SISS, YILS…YPSF, LALG…PIVV, and IGFG…LLVT. Residue Asn-199 is glycosylated (N-linked (GlcNAc...) asparagine). A run of 6 helical transmembrane segments spans residues 227–247, 264–284, 290–310, 318–338, 354–374, and 386–406; these read FILT…PITF, YLVS…GYIA, FNVS…LWLP, IAFA…SPAL, TMYA…GALI, and VFAG…RLYI.

The protein belongs to the major facilitator superfamily. Monocarboxylate porter (TC 2.A.1.13) family.

Its subcellular location is the membrane. Functionally, MFS-type transporter; part of the Fusarium detoxification of benzoxazolinone cluster 2 (FDB2) involved in the degradation of benzoxazolinones produced by the host plant. Maize, wheat, and rye produce the 2 benzoxazinone phytoanticipins 2,4-dihy-droxy-7-methoxy-1,4-benzoxazin-3-one (DIMBOA) and 2,4-dihydroxy-1,4-benzoxazin-3-one (DIBOA) that, due to their inherent instability once released, spontaneously degrade to the more stable corresponding benzoxazolinones, 6-methoxy-2-benzoxazolinone (MBOA) and 2-benzoxazolinone (BOA), respectively. The chain is MFS-type transporter FVEG_12626 from Gibberella moniliformis (strain M3125 / FGSC 7600) (Maize ear and stalk rot fungus).